A 473-amino-acid polypeptide reads, in one-letter code: Glutamate--tRNA ligase 2 (473 aa).

The 'HIGH' region signature appears at 11 to 21 (PSPTGYLHIGG). Basic and acidic residues predominate over residues 113–133 (KARAEGRPPRYDGRWRDRDPS). Residues 113–136 (KARAEGRPPRYDGRWRDRDPSEAP) form a disordered region. Residues 240 to 244 (KLSKR) carry the 'KMSKS' region motif. K243 lines the ATP pocket.

The protein belongs to the class-I aminoacyl-tRNA synthetase family. Glutamate--tRNA ligase type 1 subfamily. As to quaternary structure, monomer.

It is found in the cytoplasm. The enzyme catalyses tRNA(Glu) + L-glutamate + ATP = L-glutamyl-tRNA(Glu) + AMP + diphosphate. Catalyzes the attachment of glutamate to tRNA(Glu) in a two-step reaction: glutamate is first activated by ATP to form Glu-AMP and then transferred to the acceptor end of tRNA(Glu). The polypeptide is Glutamate--tRNA ligase 2 (Brucella abortus (strain S19)).